Here is a 170-residue protein sequence, read N- to C-terminus: MKDIERRILLGRVVGAFGVRGEIKLESWTEPRSAIFRYQPWIVRSPSGVETTIEGVRGRDSGKHLVARFPGVEDRDTVEAMRGTEIYVARSALPPPKPDEYYWVDLEGLDVKTTEGVALGQVSHLFSTGANDVVVVRGDRERMIPFVQPDFVKSVDFEANLVVVDWDPEF.

The PRC barrel domain occupies lysine 97 to phenylalanine 170.

The protein belongs to the RimM family. As to quaternary structure, binds ribosomal protein uS19.

It is found in the cytoplasm. Functionally, an accessory protein needed during the final step in the assembly of 30S ribosomal subunit, possibly for assembly of the head region. Essential for efficient processing of 16S rRNA. May be needed both before and after RbfA during the maturation of 16S rRNA. It has affinity for free ribosomal 30S subunits but not for 70S ribosomes. In Stenotrophomonas maltophilia (strain K279a), this protein is Ribosome maturation factor RimM.